The following is a 429-amino-acid chain: UDP-N-acetylglucosamine 1-carboxyvinyltransferase (429 aa).

Position 22-23 (22-23) interacts with phosphoenolpyruvate; the sequence is KN. A UDP-N-acetyl-alpha-D-glucosamine-binding site is contributed by arginine 93. Residue cysteine 117 is the Proton donor of the active site. Cysteine 117 carries the 2-(S-cysteinyl)pyruvic acid O-phosphothioketal modification. UDP-N-acetyl-alpha-D-glucosamine contacts are provided by residues 122–126, aspartate 313, and isoleucine 335; that span reads RPVDQ.

It belongs to the EPSP synthase family. MurA subfamily.

It localises to the cytoplasm. The catalysed reaction is phosphoenolpyruvate + UDP-N-acetyl-alpha-D-glucosamine = UDP-N-acetyl-3-O-(1-carboxyvinyl)-alpha-D-glucosamine + phosphate. It functions in the pathway cell wall biogenesis; peptidoglycan biosynthesis. Cell wall formation. Adds enolpyruvyl to UDP-N-acetylglucosamine. The chain is UDP-N-acetylglucosamine 1-carboxyvinyltransferase from Variovorax paradoxus (strain S110).